A 209-amino-acid polypeptide reads, in one-letter code: Uracil phosphoribosyltransferase (209 aa).

5-phospho-alpha-D-ribose 1-diphosphate is bound by residues Arg-79, Arg-104, and 131–139 (DPMLATGGS). Uracil contacts are provided by residues Ile-194 and 199-201 (GDA). Residue Asp-200 participates in 5-phospho-alpha-D-ribose 1-diphosphate binding.

This sequence belongs to the UPRTase family. The cofactor is Mg(2+).

It carries out the reaction UMP + diphosphate = 5-phospho-alpha-D-ribose 1-diphosphate + uracil. Its pathway is pyrimidine metabolism; UMP biosynthesis via salvage pathway; UMP from uracil: step 1/1. Its activity is regulated as follows. Allosterically activated by GTP. In terms of biological role, catalyzes the conversion of uracil and 5-phospho-alpha-D-ribose 1-diphosphate (PRPP) to UMP and diphosphate. This chain is Uracil phosphoribosyltransferase, found in Chromohalobacter salexigens (strain ATCC BAA-138 / DSM 3043 / CIP 106854 / NCIMB 13768 / 1H11).